Here is a 356-residue protein sequence, read N- to C-terminus: Solute carrier family 25 member 3 (356 aa).

Residues M1–A44 constitute a mitochondrion transit peptide. At A45–K57 the chain is on the mitochondrial intermembrane side. 3 Solcar repeats span residues K57 to L141, W154 to A238, and E255 to Y333. The helical transmembrane segment at Y58–L80 threads the bilayer. The Mitochondrial matrix segment spans residues D81–K115. K93 bears the N6-acetyllysine mark. Position 106 is an N6-methyllysine (K106). A helical transmembrane segment spans residues G116 to Y135. Over E136–R155 the chain is Mitochondrial intermembrane. A helical membrane pass occupies residues T156 to M177. Residues E178–K212 are Mitochondrial matrix-facing. Phosphotyrosine is present on Y190. An N6-acetyllysine modification is found at K203. The chain crosses the membrane as a helical span at residues G213–F232. Residues E233 to E255 are Mitochondrial intermembrane-facing. The helical transmembrane segment at Q256 to A278 threads the bilayer. Residues D279 to G308 are Mitochondrial matrix-facing. The chain crosses the membrane as a helical span at residues L309–Y327. Over D328–E356 the chain is Mitochondrial intermembrane.

The protein belongs to the mitochondrial carrier (TC 2.A.29) family. As to quaternary structure, interacts with PPIF; the interaction is impaired by CsA.

It localises to the mitochondrion inner membrane. It catalyses the reaction phosphate(in) + H(+)(in) = phosphate(out) + H(+)(out). In terms of biological role, inorganic ion transporter that transports phosphate or copper ions across the mitochondrial inner membrane into the matrix compartment. Mediates proton-coupled symport of phosphate ions necessary for mitochondrial oxidative phosphorylation of ADP to ATP. Transports copper ions probably in the form of anionic copper(I) complexes to maintain mitochondrial matrix copper pool and to supply copper for cytochrome C oxidase complex assembly. May also play a role in regulation of the mitochondrial permeability transition pore (mPTP). The sequence is that of Solute carrier family 25 member 3 from Rattus norvegicus (Rat).